A 713-amino-acid chain; its full sequence is Polyribonucleotide nucleotidyltransferase (713 aa).

Mg(2+) contacts are provided by D488 and D494. Residues 555–614 (PRIEVMNIPTDKIRDVIGSGGKVIREIVEKTGAKINIEDDGTVKIASSNGKEIEAAKKWI) form the KH domain. The region spanning 624–692 (GEIYEGTVVK…ERGKVRLSMK (69 aa)) is the S1 motif domain.

This sequence belongs to the polyribonucleotide nucleotidyltransferase family. The cofactor is Mg(2+).

The protein localises to the cytoplasm. The catalysed reaction is RNA(n+1) + phosphate = RNA(n) + a ribonucleoside 5'-diphosphate. Its function is as follows. Involved in mRNA degradation. Catalyzes the phosphorolysis of single-stranded polyribonucleotides processively in the 3'- to 5'-direction. The sequence is that of Polyribonucleotide nucleotidyltransferase from Brucella anthropi (strain ATCC 49188 / DSM 6882 / CCUG 24695 / JCM 21032 / LMG 3331 / NBRC 15819 / NCTC 12168 / Alc 37) (Ochrobactrum anthropi).